The following is a 161-amino-acid chain: ATP synthase subunit b 1 (161 aa).

A helical transmembrane segment spans residues Leu-3–Leu-23.

The protein belongs to the ATPase B chain family. As to quaternary structure, F-type ATPases have 2 components, F(1) - the catalytic core - and F(0) - the membrane proton channel. F(1) has five subunits: alpha(3), beta(3), gamma(1), delta(1), epsilon(1). F(0) has three main subunits: a(1), b(2) and c(10-14). The alpha and beta chains form an alternating ring which encloses part of the gamma chain. F(1) is attached to F(0) by a central stalk formed by the gamma and epsilon chains, while a peripheral stalk is formed by the delta and b chains.

The protein localises to the cell inner membrane. Functionally, f(1)F(0) ATP synthase produces ATP from ADP in the presence of a proton or sodium gradient. F-type ATPases consist of two structural domains, F(1) containing the extramembraneous catalytic core and F(0) containing the membrane proton channel, linked together by a central stalk and a peripheral stalk. During catalysis, ATP synthesis in the catalytic domain of F(1) is coupled via a rotary mechanism of the central stalk subunits to proton translocation. Component of the F(0) channel, it forms part of the peripheral stalk, linking F(1) to F(0). The polypeptide is ATP synthase subunit b 1 (Sinorhizobium medicae (strain WSM419) (Ensifer medicae)).